Consider the following 124-residue polypeptide: Small ribosomal subunit protein uS12 (124 aa).

Residues 1 to 23 form a disordered region; the sequence is MATINQLVRKPRRSKVTKSNSAA. At Asp89 the chain carries 3-methylthioaspartic acid.

The protein belongs to the universal ribosomal protein uS12 family. In terms of assembly, part of the 30S ribosomal subunit. Contacts proteins S8 and S17. May interact with IF1 in the 30S initiation complex.

With S4 and S5 plays an important role in translational accuracy. Functionally, interacts with and stabilizes bases of the 16S rRNA that are involved in tRNA selection in the A site and with the mRNA backbone. Located at the interface of the 30S and 50S subunits, it traverses the body of the 30S subunit contacting proteins on the other side and probably holding the rRNA structure together. The combined cluster of proteins S8, S12 and S17 appears to hold together the shoulder and platform of the 30S subunit. The chain is Small ribosomal subunit protein uS12 from Pseudoalteromonas translucida (strain TAC 125).